A 241-amino-acid chain; its full sequence is Meiotically up-regulated gene 130 protein (241 aa).

The protein resides in the mitochondrion. Its function is as follows. Has a role in meiosis. This Schizosaccharomyces pombe (strain 972 / ATCC 24843) (Fission yeast) protein is Meiotically up-regulated gene 130 protein (mug130).